A 222-amino-acid polypeptide reads, in one-letter code: Small ribosomal subunit protein eS1 (222 aa).

The protein belongs to the eukaryotic ribosomal protein eS1 family.

The polypeptide is Small ribosomal subunit protein eS1 (Pyrobaculum neutrophilum (strain DSM 2338 / JCM 9278 / NBRC 100436 / V24Sta) (Thermoproteus neutrophilus)).